Here is a 608-residue protein sequence, read N- to C-terminus: Chaperone protein HtpG (608 aa).

Positions 1-332 (MQFQTEVNQL…VEDLPLNVSR (332 aa)) are a; substrate-binding. The tract at residues 333–536 (EILQENQILK…KNKPDFAMQQ (204 aa)) is b. Residues 537 to 608 (LLKQMGQEQN…LTKIINKAFS (72 aa)) form a c region.

This sequence belongs to the heat shock protein 90 family. Homodimer.

Its subcellular location is the cytoplasm. Its function is as follows. Molecular chaperone. Has ATPase activity. This Campylobacter jejuni subsp. jejuni serotype O:2 (strain ATCC 700819 / NCTC 11168) protein is Chaperone protein HtpG.